The chain runs to 910 residues: Ubiquitin carboxyl-terminal hydrolase 9 (910 aa).

Positions 19–134 (TTPEEEKRIV…GGPPIERKLI (116 aa)) constitute a DUSP domain. Residues 68–89 (ISGESSEASRPGPIDNHDIIES) form a disordered region. The USP domain maps to 303-894 (AGLSNLGNTC…AAYVLFYRRV (592 aa)). Cysteine 312 (nucleophile) is an active-site residue. Residue histidine 852 is the Proton acceptor of the active site.

The protein belongs to the peptidase C19 family.

The enzyme catalyses Thiol-dependent hydrolysis of ester, thioester, amide, peptide and isopeptide bonds formed by the C-terminal Gly of ubiquitin (a 76-residue protein attached to proteins as an intracellular targeting signal).. Its function is as follows. Recognizes and hydrolyzes the peptide bond at the C-terminal Gly of ubiquitin. Involved in the processing of poly-ubiquitin precursors as well as that of ubiquitinated proteins. This chain is Ubiquitin carboxyl-terminal hydrolase 9 (UBP9), found in Arabidopsis thaliana (Mouse-ear cress).